Consider the following 137-residue polypeptide: MQKTFFIIKPDAVKRHLIGQVLDRIERRGFVIERMEMLMLDEERLKEHYAQLADKPFFPSISEFMMSGPAVIGIMSGPGVIKSWRDMMGATNPGDAAPGTIRGDFATAPDGDMIPNIVHGSDSEESAAREIKIWFGE.

5 residues coordinate ATP: lysine 9, phenylalanine 57, arginine 85, threonine 91, and arginine 102. Histidine 119 acts as the Pros-phosphohistidine intermediate in catalysis.

This sequence belongs to the NDK family. Homotetramer. It depends on Mg(2+) as a cofactor.

The protein resides in the cytoplasm. The enzyme catalyses a 2'-deoxyribonucleoside 5'-diphosphate + ATP = a 2'-deoxyribonucleoside 5'-triphosphate + ADP. It catalyses the reaction a ribonucleoside 5'-diphosphate + ATP = a ribonucleoside 5'-triphosphate + ADP. In terms of biological role, major role in the synthesis of nucleoside triphosphates other than ATP. The ATP gamma phosphate is transferred to the NDP beta phosphate via a ping-pong mechanism, using a phosphorylated active-site intermediate. This is Nucleoside diphosphate kinase from Streptococcus thermophilus (strain CNRZ 1066).